The primary structure comprises 527 residues: Light-independent protochlorophyllide reductase subunit B (527 aa).

Asp36 contributes to the [4Fe-4S] cluster binding site. Asp292 (proton donor) is an active-site residue. Substrate is bound at residue 428–429 (GL).

Belongs to the ChlB/BchB/BchZ family. Protochlorophyllide reductase is composed of three subunits; BchL, BchN and BchB. Forms a heterotetramer of two BchB and two BchN subunits. Requires [4Fe-4S] cluster as cofactor.

It catalyses the reaction chlorophyllide a + oxidized 2[4Fe-4S]-[ferredoxin] + 2 ADP + 2 phosphate = protochlorophyllide a + reduced 2[4Fe-4S]-[ferredoxin] + 2 ATP + 2 H2O. It functions in the pathway porphyrin-containing compound metabolism; bacteriochlorophyll biosynthesis (light-independent). Component of the dark-operative protochlorophyllide reductase (DPOR) that uses Mg-ATP and reduced ferredoxin to reduce ring D of protochlorophyllide (Pchlide) to form chlorophyllide a (Chlide). This reaction is light-independent. The NB-protein (BchN-BchB) is the catalytic component of the complex. The polypeptide is Light-independent protochlorophyllide reductase subunit B (Chlorobium phaeovibrioides (strain DSM 265 / 1930) (Prosthecochloris vibrioformis (strain DSM 265))).